The chain runs to 434 residues: Sensor histidine kinase Hik2 (434 aa).

The 137-residue stretch at 16–152 folds into the GAF domain; sequence ISLCQSQVRL…EAIAKSLAVA (137 aa). Position 19 (cysteine 19) interacts with [3Fe-4S] cluster. The 251-residue stretch at 182–432 folds into the Histidine kinase domain; sequence DLLHQLRNPL…TFTLWLRSGE (251 aa). A Phosphohistidine; by autocatalysis modification is found at histidine 185. Positions 357–361 match the G1 box motif; the sequence is DTGYG. A G2 box motif is present at residues 386-390; that stretch reads GTGLG.

Belongs to the chloroplast sensor kinase protein family. In terms of assembly, exists as monomers, tetramers, hexamers and other higher-order oligomers; all are able to autophosphorylate. Upon treatment with 0.5 M NaCl only tetramers are seen, which are probably inactive. Interacts with both RppA and Rre1. [3Fe-4S] cluster is required as a cofactor. Post-translationally, autophosphorylates, probably on His-185.

Its subcellular location is the cytoplasm. It carries out the reaction ATP + protein L-histidine = ADP + protein N-phospho-L-histidine.. Autophosphorylation is inhibited by Na(+) but not by Cl(-). Reducing agents dithionite, duroquinol and decyl-plastoquinone, but not NADPH or ferredoxin inhibit autophosphorylation. Oxidation of the Fe-S cluster (with potassium ferricyanide) induces a conformational change that is conducive to its autophosphorylation activity. Member of possibly 2 two-component regulatory system(s) Hik2/Rre1 and Hik2/RppA. Transduces PQ (plastoquinone) redox signals to photosystem gene expression machinery during the adjustment of photosystem stoichiometry. Reduced PQ suppresses its autophosphorylation activity (i.e. kinase activity is higher under oxidizing conditions). Member of two-component regulatory system Hik2/Rre1, controls expression of sigB (sll0306), sll0528, slr1119, slr0852 and ssr3188 in response to hyperosmotic stress. Activity responds to high salt (with a linear response as concentrations rise to 0.5 M NaCl); detects Cl(-) levels. Autophosphorylates and transfers phosphate to Rre1. May transfer phosphate to RppA in a possible Hik2/RppA two-component system. This Synechocystis sp. (strain ATCC 27184 / PCC 6803 / Kazusa) protein is Sensor histidine kinase Hik2.